The chain runs to 196 residues: UPF0200 protein MK0400 (196 aa).

7-14 serves as a coordination point for ATP; it reads GMPGAGKG.

It belongs to the UPF0200 family.

The chain is UPF0200 protein MK0400 from Methanopyrus kandleri (strain AV19 / DSM 6324 / JCM 9639 / NBRC 100938).